A 381-amino-acid polypeptide reads, in one-letter code: tRNA (guanine(26)-N(2))-dimethyltransferase (381 aa).

Residues 6 to 378 enclose the Trm1 methyltransferase domain; that stretch reads FEVHEGKAKV…APYEVFVEVM (373 aa). S-adenosyl-L-methionine contacts are provided by Arg38, Arg63, Asp80, Asp122, and Ala123.

It belongs to the class I-like SAM-binding methyltransferase superfamily. Trm1 family. In terms of assembly, monomer.

It catalyses the reaction guanosine(26) in tRNA + 2 S-adenosyl-L-methionine = N(2)-dimethylguanosine(26) in tRNA + 2 S-adenosyl-L-homocysteine + 2 H(+). Its function is as follows. Dimethylates a single guanine residue at position 26 of a number of tRNAs using S-adenosyl-L-methionine as donor of the methyl groups. The chain is tRNA (guanine(26)-N(2))-dimethyltransferase from Pyrococcus furiosus (strain ATCC 43587 / DSM 3638 / JCM 8422 / Vc1).